The following is a 324-amino-acid chain: tRNA N6-adenosine threonylcarbamoyltransferase (324 aa).

Fe cation-binding residues include His107, His111, and Tyr128. Residues 128-132 (YVSGG), Asp160, Gly173, Glu177, and Asn256 each bind substrate. Asp284 lines the Fe cation pocket.

Belongs to the KAE1 / TsaD family. In terms of assembly, monomer. Component of the KEOPS complex that consists of Kae1, Bud32, Cgi121 and Pcc1; the whole complex dimerizes. It depends on Fe(2+) as a cofactor.

The protein resides in the cytoplasm. It carries out the reaction L-threonylcarbamoyladenylate + adenosine(37) in tRNA = N(6)-L-threonylcarbamoyladenosine(37) in tRNA + AMP + H(+). Required for the formation of a threonylcarbamoyl group on adenosine at position 37 (t(6)A37) in tRNAs that read codons beginning with adenine. Is a component of the KEOPS complex that is probably involved in the transfer of the threonylcarbamoyl moiety of threonylcarbamoyl-AMP (TC-AMP) to the N6 group of A37. Kae1 likely plays a direct catalytic role in this reaction, but requires other protein(s) of the complex to fulfill this activity. This Methanothrix thermoacetophila (strain DSM 6194 / JCM 14653 / NBRC 101360 / PT) (Methanosaeta thermophila) protein is tRNA N6-adenosine threonylcarbamoyltransferase.